Consider the following 410-residue polypeptide: Protein disulfide isomerase CRELD1 (410 aa).

An N-terminal signal peptide occupies residues 1-29 (MGMSRRMFLTVYGSLWLLLLLSRPGVSKP). Over 30 to 352 (QLCQTCQNLV…GLFDDITDDE (323 aa)) the chain is Extracellular. Residues 32 to 35 (CQTC) carry the CXXC motif. 4 cysteine pairs are disulfide-bonded: C32–C35, C141–C155, C149–C167, and C169–C178. Positions 139–179 (LSCPGGTEKPCSGNGQCNGDGTRFGTGVCDCYTSYGGPVCM) constitute an EGF-like 1 domain. 2 FU repeats span residues 194 to 243 (HLVC…DHCK) and 254 to 301 (SYEC…ELPK). The short motif at 264–267 (CIGC) is the CXXC element. 4 disulfides stabilise this stretch: C264–C267, C295–C309, C302–C318, and C320–C331. Positions 291-332 (DVDECDSELPKCKGSHEECVNTEGSFTCVCEKDYSRIDGMCR) constitute an EGF-like 2; calcium-binding domain. The chain crosses the membrane as a helical span at residues 353-373 (VVVLQQMFFGVVICALATLAA). K374 is a topological domain (cytoplasmic). A helical transmembrane segment spans residues 375 to 395 (GDMVFTAIFIGAVAAMAGYWL). The Extracellular portion of the chain corresponds to 396–410 (SEKGDRALDSFMKGR).

This sequence belongs to the CRELD family.

It is found in the membrane. It carries out the reaction Catalyzes the rearrangement of -S-S- bonds in proteins.. Protein disulfide isomerase. Promotes the localization of acetylcholine receptors (AChRs) to the plasma membrane. This is Protein disulfide isomerase CRELD1 (creld1) from Xenopus tropicalis (Western clawed frog).